Reading from the N-terminus, the 126-residue chain is uncharacterized protein (126 aa).

Transmembrane regions (helical) follow at residues 21–43 (LIVW…RIFS) and 48–70 (SVTF…LLLL).

It is found in the membrane. This is an uncharacterized protein from Saccharomyces cerevisiae (strain ATCC 204508 / S288c) (Baker's yeast).